Here is a 490-residue protein sequence, read N- to C-terminus: 5-hydroxytryptamine receptor 3A (490 aa).

The N-terminal stretch at 1–19 is a signal peptide; it reads MVLWLQLALLALLLPTSLA. Topologically, residues 20 to 249 are extracellular; the sequence is QGEVRGKGTA…FYVVIRRRPL (230 aa). N33, N109, N175, and N191 each carry an N-linked (GlcNAc...) asparagine glycan. The cysteines at positions 162 and 176 are disulfide-linked. The chain crosses the membrane as a helical span at residues 250–270; that stretch reads FYAVTLLLPSIFLMIVDIVGF. Residues 271–285 lie on the Cytoplasmic side of the membrane; that stretch reads YLPPDSGERVSFKIT. The chain crosses the membrane as a helical span at residues 286-306; that stretch reads LLLGYSVFLIIVSDTLPATAI. Over 307-312 the chain is Extracellular; that stretch reads GTPLIS. A helical transmembrane segment spans residues 313 to 333; that stretch reads VYFVVCMALLVISLAETILIV. Residues 334–467 lie on the Cytoplasmic side of the membrane; that stretch reads RLVHKQDLQQ…GSVLDKLLFR (134 aa). The disordered stretch occupies residues 401-422; sequence GGPQDLEKTSRGRGSPPPPPRE. An HA-stretch; determines single-channel conductance in 5-HT3 receptors region spans residues 426–462; it reads AMCGLLQELASIRHFLEKREETREVARDWLRVGSVLD. A helical membrane pass occupies residues 468-488; it reads VYLLAVLAYSITLVTLWSVWH. Topologically, residues 489–490 are extracellular; sequence YA.

This sequence belongs to the ligand-gated ion channel (TC 1.A.9) family. 5-hydroxytryptamine receptor (TC 1.A.9.2) subfamily. HTR3A sub-subfamily. Forms homopentameric as well as heteropentameric serotonin-activated cation-selective channel complexes with HTR3B or HTR3C or HTR3D or HTR3E. The homomeric complex is functional but exhibits low conductance with modified voltage dependence, and decreased agonist and antagonist affinity. Heteropentameric complexes display properties which resemble that of neuronal serotonin-activated channels in vivo. Interacts with RIC3. As to expression, expressed in cortex, intestine and liver. Not expressed in muscle or spleen.

Its subcellular location is the postsynaptic cell membrane. The protein localises to the cell membrane. The enzyme catalyses Na(+)(in) = Na(+)(out). The catalysed reaction is K(+)(in) = K(+)(out). It catalyses the reaction Ca(2+)(in) = Ca(2+)(out). It carries out the reaction Mg(2+)(in) = Mg(2+)(out). In terms of biological role, forms serotonin (5-hydroxytryptamine/5-HT3)-activated cation-selective channel complexes, which when activated cause fast, depolarizing responses in neurons. The polypeptide is 5-hydroxytryptamine receptor 3A (Cavia porcellus (Guinea pig)).